The following is an 89-amino-acid chain: Small ribosomal subunit protein uS15 (89 aa).

The segment covering 1 to 13 has biased composition (basic and acidic residues); sequence MTISKERKEEVIS. The interval 1–24 is disordered; that stretch reads MTISKERKEEVISEHGAAAGDTGS.

Belongs to the universal ribosomal protein uS15 family. Part of the 30S ribosomal subunit. Forms a bridge to the 50S subunit in the 70S ribosome, contacting the 23S rRNA.

One of the primary rRNA binding proteins, it binds directly to 16S rRNA where it helps nucleate assembly of the platform of the 30S subunit by binding and bridging several RNA helices of the 16S rRNA. In terms of biological role, forms an intersubunit bridge (bridge B4) with the 23S rRNA of the 50S subunit in the ribosome. The sequence is that of Small ribosomal subunit protein uS15 from Rhodopirellula baltica (strain DSM 10527 / NCIMB 13988 / SH1).